We begin with the raw amino-acid sequence, 20 residues long: Apidaecin 1+ (20 aa).

The segment at 1-20 (GKPNRPRPAPIQPRPPHPRL) is disordered.

This sequence belongs to the apidaecin family.

The protein resides in the secreted. In terms of biological role, antimicrobial peptide active against many Gram-negative enterobacterial and plant-associated bacterial species. Not active against other bacterial species like H.pylori, P.mirabilis, B.pertussis or N.gonorrhoeae. Its function is as follows. Among others, also active against C.jejuni and L.pneumophila but not against Y.enterocolitica. Among others, also active against Y.enterocolitica butnot against L.pneumophila and C.jejuni. This chain is Apidaecin 1+, found in Pimpla disparis (Parasitic wasp).